An 88-amino-acid polypeptide reads, in one-letter code: MAEAQKTVRTLTGRVVSDKMDKTVTVLIERRVKHPIYGKYVKRSTKLHAHDESNQCRIGDLVTIRETRPLAKTKAWTLVDIVERAVEV.

It belongs to the universal ribosomal protein uS17 family. Part of the 30S ribosomal subunit.

Its function is as follows. One of the primary rRNA binding proteins, it binds specifically to the 5'-end of 16S ribosomal RNA. In Pseudomonas aeruginosa (strain LESB58), this protein is Small ribosomal subunit protein uS17.